A 504-amino-acid polypeptide reads, in one-letter code: Arabinose import ATP-binding protein AraG (504 aa).

ABC transporter domains lie at 8-243 (LSFR…MVGR) and 256-499 (YGEE…MPKV). Residue 40–47 (GENGAGKS) participates in ATP binding.

This sequence belongs to the ABC transporter superfamily. Arabinose importer (TC 3.A.1.2.2) family. In terms of assembly, the complex is composed of two ATP-binding proteins (AraG), two transmembrane proteins (AraH) and a solute-binding protein (AraF).

It is found in the cell inner membrane. It catalyses the reaction L-arabinose(out) + ATP + H2O = L-arabinose(in) + ADP + phosphate + H(+). In terms of biological role, part of the ABC transporter complex AraFGH involved in arabinose import. Responsible for energy coupling to the transport system. This chain is Arabinose import ATP-binding protein AraG, found in Shigella boydii serotype 4 (strain Sb227).